Consider the following 284-residue polypeptide: 3-oxoadipate:acetyl-CoA acetyltransferase (284 aa).

Positions 47, 49, and 229 each coordinate Zn(2+).

The protein belongs to the BKACE family. It depends on Zn(2+) as a cofactor.

It catalyses the reaction 3-oxoadipate + acetyl-CoA = acetoacetate + succinyl-CoA. Functionally, catalyzes the condensation of 3-oxoadipate (beta-ketoadipate) and acetyl-CoA, forming acetoacetate and succinyl-CoA. Is likely involved is the degradation of 3-oxoadipate through an alternative pathway, within catechol degradation. The polypeptide is 3-oxoadipate:acetyl-CoA acetyltransferase (Cupriavidus necator (strain ATCC 17699 / DSM 428 / KCTC 22496 / NCIMB 10442 / H16 / Stanier 337) (Ralstonia eutropha)).